We begin with the raw amino-acid sequence, 322 residues long: Myeloid-associated differentiation marker (322 aa).

The segment at 1–25 (MPVTVTRTTITTTTTSSSGQGSPTI) is disordered. S22 carries the phosphoserine modification. 2 consecutive MARVEL domains span residues 31 to 163 (ALTQ…ARPG) and 168 to 319 (YMAT…HLVF). A run of 8 helical transmembrane segments spans residues 41 to 61 (LLQL…GAWT), 70 to 90 (FTWC…LCGL), 101 to 121 (FPIT…IIYP), 137 to 157 (AIAA…EVAW), 171 to 191 (TVPG…FAFI), 203 to 223 (LEWC…AILL), 239 to 259 (FLSG…VLWP), and 294 to 314 (LAVA…LVHS).

It belongs to the MAL family.

Its subcellular location is the membrane. This is Myeloid-associated differentiation marker (MYADM) from Pongo abelii (Sumatran orangutan).